The sequence spans 371 residues: Trans-enoyl reductase calK (371 aa).

51–54 (NDHK) serves as a coordination point for NADP(+). Position 145–152 (145–152 (WSTISLAF)) interacts with substrate. NADP(+)-binding positions include 181–184 (GTAS), 204–207 (SNQS), Y222, and 269–270 (LE). 289 to 293 (GFQVL) lines the substrate pocket. Position 359 to 360 (359 to 360 (VR)) interacts with NADP(+).

The protein belongs to the zinc-containing alcohol dehydrogenase family. In terms of assembly, monomer.

Its pathway is secondary metabolite biosynthesis. Functionally, trans-enoyl reductase; part of the gene cluster that mediates the biosynthesis of calbistrin A and related compounds. Calbistrin A is a secondary metabolite with an interesting structure that was recently found to have bioactivity against leukemia cells. It consists of two polyketides linked by an ester bond: a bicyclic decalin containing polyketide and a linear 12 carbon dioic acid structure. The polyketide synthase calA is probably responsible for forming the decalin moiety. Because calA lacks a designated enoylreductase (ER) domain, the required activity is provided by the trans-enoyl reductase calK. Following release from the PKS, calF then probably catalyzes the oxidation and the subsequent Diels Alder cycloisomerization that lead to the formation of the decalin moiety. The decalin polyketide backbone includes two C-methyl groups, at C7 and C11 in backbone, of which the C7 position is probably methylated by the methyltransferase domain of calA. A candidate for adding the methyl group at C11, if not done by CalA, is the cluster methyltransferase calH. Several additional tailoring enzymes within the cluster could be involved in the modification of the decalin polyketide product. Those include the 3 cytochrome P450 monooxygenases CalE, CalG and CalL, of which one might be responsible for the introduction of the extra hydroxyl group attached to the backbone of the decalin moiety, at position C9 in the backbone, that allows for attachment of the linear moiety. One tailoring enzyme activity that is expected to be involved in biosynthesis of calbistrin is an acyltransferase for connecting the two polyketide synthase products, and which could be performed by the cluster acyltransferase calJ. The enzyme responsible for the biosynthesis of the linear moiety, probably a second PKS, has not been identified yet. The polypeptide is Trans-enoyl reductase calK (Penicillium decumbens).